We begin with the raw amino-acid sequence, 298 residues long: MGDQALSFLKDFLAGGIAAAVSKTAVAPIERVKLLLQVQHASKQISAEKQYKGIIDCVVRIPKEQGFLSFWRGNLANVIRYFPTQALNFAFKDKYKQIFLGGVDRHKQFWRYFAGNLASGGAAGATSLCFVYPLDFARTRLAADVGKGSSQREFNGLGDCLTKIFKSDGLKGLYQGFSVSVQGIIIYRAAYFGVYDTAKGMLPDPKNVHIIVSWMIAQSVTAVAGLVSYPFDTVRRRMMMQSGRKGADIMYTGTVDCWRKIAKDEGRKAFFKGAWSNVLRGMGGAFVLVLYDEIKKYV.

Residues 1–7 (MGDQALS) lie on the Mitochondrial intermembrane side of the membrane. G2 bears the N-acetylglycine mark. A Solcar 1 repeat occupies 6–98 (LSFLKDFLAG…FAFKDKYKQI (93 aa)). S7 is modified (phosphoserine). The chain crosses the membrane as a helical span at residues 8-37 (FLKDFLAGGIAAAVSKTAVAPIERVKLLLQ). The Mitochondrial matrix segment spans residues 38 to 74 (VQHASKQISAEKQYKGIIDCVVRIPKEQGFLSFWRGN). K52 carries the N6,N6,N6-trimethyllysine modification. Residues 75-99 (LANVIRYFPTQALNFAFKDKYKQIF) traverse the membrane as a helical segment. R80 and K92 together coordinate ADP. Residues 100–109 (LGGVDRHKQF) lie on the Mitochondrial intermembrane side of the membrane. Residues 110–130 (WRYFAGNLASGGAAGATSLCF) form a helical membrane-spanning segment. Solcar repeat units follow at residues 111 to 201 (RYFA…AKGM) and 212 to 297 (VSWM…IKKY). The Mitochondrial matrix portion of the chain corresponds to 131–178 (VYPLDFARTRLAADVGKGSSQREFNGLGDCLTKIFKSDGLKGLYQGFS). Position 147 is an N6-succinyllysine (K147). A phosphoserine mark is found at S149 and S150. The residue at position 160 (C160) is an S-nitrosocysteine. A helical membrane pass occupies residues 179 to 199 (VSVQGIIIYRAAYFGVYDTAK). The Mitochondrial intermembrane segment spans residues 200-210 (GMLPDPKNVHI). A helical membrane pass occupies residues 211–231 (IVSWMIAQSVTAVAGLVSYPF). The Mitochondrial matrix segment spans residues 232–273 (DTVRRRMMMQSGRKGADIMYTGTVDCWRKIAKDEGRKAFFKG). R235 contacts ADP. The tract at residues 235 to 240 (RRRMMM) is important for transport activity. The short motif at 235-240 (RRRMMM) is the Nucleotide carrier signature motif element. An N6-succinyllysine mark is found at K245 and K272. A helical transmembrane segment spans residues 274-291 (AWSNVLRGMGGAFVLVLY). The Mitochondrial intermembrane portion of the chain corresponds to 292–298 (DEIKKYV).

This sequence belongs to the mitochondrial carrier (TC 2.A.29) family. Monomer. Found in a complex with ARL2, ARL2BP and SLC25A4/ANT1. Interacts with ARL2BP. Interacts with TIMM44; leading to inhibit the presequence translocase TIMM23, thereby promoting stabilization of PINK1. Under cell death induction, transglutaminated by TGM2. Transglutamination leads to formation of covalent cross-links between a glutamine and the epsilon-amino group of a lysine residue, forming polymers.

It localises to the mitochondrion inner membrane. Its subcellular location is the membrane. It catalyses the reaction ADP(in) + ATP(out) = ADP(out) + ATP(in). The enzyme catalyses H(+)(in) = H(+)(out). Its activity is regulated as follows. The matrix-open state (m-state) is inhibited by the membrane-permeable bongkrekic acid (BKA). The cytoplasmic-open state (c-state) is inhibited by the membrane-impermeable toxic inhibitor carboxyatractyloside (CATR). Proton transporter activity is inhibited by ADP:ATP antiporter activity. Its function is as follows. ADP:ATP antiporter that mediates import of ADP into the mitochondrial matrix for ATP synthesis, and export of ATP out to fuel the cell. Cycles between the cytoplasmic-open state (c-state) and the matrix-open state (m-state): operates by the alternating access mechanism with a single substrate-binding site intermittently exposed to either the cytosolic (c-state) or matrix (m-state) side of the inner mitochondrial membrane. In addition to its ADP:ATP antiporter activity, also involved in mitochondrial uncoupling and mitochondrial permeability transition pore (mPTP) activity. Plays a role in mitochondrial uncoupling by acting as a proton transporter: proton transport uncouples the proton flows via the electron transport chain and ATP synthase to reduce the efficiency of ATP production and cause mitochondrial thermogenesis. Proton transporter activity is inhibited by ADP:ATP antiporter activity, suggesting that SLC25A4/ANT1 acts as a master regulator of mitochondrial energy output by maintaining a delicate balance between ATP production (ADP:ATP antiporter activity) and thermogenesis (proton transporter activity). Proton transporter activity requires free fatty acids as cofactor, but does not transport it. Also plays a key role in mPTP opening, a non-specific pore that enables free passage of the mitochondrial membranes to solutes of up to 1.5 kDa, and which contributes to cell death. It is however unclear if SLC25A4/ANT1 constitutes a pore-forming component of mPTP or regulates it. Acts as a regulator of mitophagy independently of ADP:ATP antiporter activity: promotes mitophagy via interaction with TIMM44, leading to inhibit the presequence translocase TIMM23, thereby promoting stabilization of PINK1. This chain is ADP/ATP translocase 1, found in Rattus norvegicus (Rat).